A 333-amino-acid chain; its full sequence is Acetyltransferase Pat (333 aa).

3',5'-cyclic AMP-binding positions include 88–91 (GEIA), 98–99 (RS), and Arg-138. In terms of domain architecture, N-acetyltransferase spans 156 to 318 (LMLRPVLPGD…GELSLGREMV (163 aa)). His-173 is a substrate binding site. A Mg(2+)-binding site is contributed by Asp-214. Substrate is bound by residues 238–240 (FTV), 246–251 (GRGIGS), Asn-277, and Arg-286.

Homodimer. Mg(2+) is required as a cofactor.

With respect to regulation, autoinhibited and allosterically activated by 3,5-cyclic adenosine monophosphate (cAMP). An extensive conformational rearrangement relieves this autoinhibition by means of a substrate-mimicking lid that covers the protein-substrate binding surface. Catalyzes specifically the acetylation of the epsilon-amino group of a highly conserved lysine residue in acetyl-CoA synthetase (ACS). This acetylation results in the inactivation of ACS activity and could be important for mycobacteria to adjust to environmental changes. The chain is Acetyltransferase Pat from Mycobacterium tuberculosis (strain ATCC 25618 / H37Rv).